The sequence spans 196 residues: Endonuclease V (196 aa).

Mg(2+) is bound by residues aspartate 37 and aspartate 98.

The protein belongs to the endonuclease V family. The cofactor is Mg(2+).

Its subcellular location is the cytoplasm. The catalysed reaction is Endonucleolytic cleavage at apurinic or apyrimidinic sites to products with a 5'-phosphate.. Its function is as follows. DNA repair enzyme involved in the repair of deaminated bases. Selectively cleaves double-stranded DNA at the second phosphodiester bond 3' to a deoxyinosine leaving behind the intact lesion on the nicked DNA. The chain is Endonuclease V from Sulfolobus acidocaldarius (strain ATCC 33909 / DSM 639 / JCM 8929 / NBRC 15157 / NCIMB 11770).